Reading from the N-terminus, the 932-residue chain is DNA mismatch repair protein MutS (932 aa).

615–622 (GPNMAGKS) serves as a coordination point for ATP.

Belongs to the DNA mismatch repair MutS family.

This protein is involved in the repair of mismatches in DNA. It is possible that it carries out the mismatch recognition step. This protein has a weak ATPase activity. This is DNA mismatch repair protein MutS from Clostridium botulinum (strain Langeland / NCTC 10281 / Type F).